Here is a 149-residue protein sequence, read N- to C-terminus: Transcription antitermination protein NusB (149 aa).

It belongs to the NusB family.

Functionally, involved in transcription antitermination. Required for transcription of ribosomal RNA (rRNA) genes. Binds specifically to the boxA antiterminator sequence of the ribosomal RNA (rrn) operons. The polypeptide is Transcription antitermination protein NusB (Acinetobacter baumannii (strain AB307-0294)).